The sequence spans 465 residues: Lactaldehyde dehydrogenase (465 aa).

220 to 225 lines the NAD(+) pocket; sequence GSVEVG. Residues Glu-240 and Cys-274 contribute to the active site.

Belongs to the aldehyde dehydrogenase family. As to quaternary structure, homotetramer.

The enzyme catalyses (S)-lactaldehyde + NAD(+) + H2O = (S)-lactate + NADH + 2 H(+). It participates in cofactor biosynthesis; coenzyme F420 biosynthesis. Functionally, involved in F420 biosynthesis through the oxidation of lactaldehyde to lactate. This chain is Lactaldehyde dehydrogenase, found in Methanococcus maripaludis (strain DSM 14266 / JCM 13030 / NBRC 101832 / S2 / LL).